The chain runs to 133 residues: Gamma-crystallin 1 (133 aa).

The Beta/gamma crystallin 'Greek key' 2 domain maps to 1 to 41 (WMLYEHPNYTGHQYFLRRGEYPDFQQWMGLNDSIRSCRVIP). The segment at 42–46 (QHRGS) is connecting peptide. 2 Beta/gamma crystallin 'Greek key' domains span residues 47 to 87 (FRLR…NVLE) and 88 to 130 (GHWI…RRVQ).

Belongs to the beta/gamma-crystallin family. As to quaternary structure, monomer.

In terms of biological role, crystallins are the dominant structural components of the vertebrate eye lens. This is Gamma-crystallin 1 from Rana temporaria (European common frog).